Consider the following 340-residue polypeptide: CRISPR system Cmr subunit Cmr6 (340 aa).

It belongs to the CRISPR system Cmr6 family. As to quaternary structure, part of the type III-B Cmr ribonucleoprotein (RNP) complex, an elongated RNP with Cmr2 and Cmr3 as the base, with Cmr4 and Cmr5 forming a helical core along the mature crRNA (39 or 45 nt in length), while the complex is capped by Cmr6 and Cmr1. The 5' end of the crRNA is bound to Cmr2 and Cmr3, while Cmr6 and a Cmr1 subunit (Cmr1-1 or Cmr1-2) cap the 3' end of the crRNA. The target RNA lies antiparallel to the crRNA, with its 5' end near Cmr1 and Cmr6 and its 3' end near Cmr2 and Cmr3; major target cleavage occurs nears the junction of Cmr1/Cmr6 and Cmr4/Cmr, with minor cleavage occurring at 6 nt intervals which coincide with the proposed spacing of Cmr4 subunits. Interacts with Cmr4 and Cmr5.

The protein localises to the cytoplasm. In terms of biological role, CRISPR (clustered regularly interspaced short palindromic repeat), is an adaptive immune system that provides protection against mobile genetic elements (viruses, transposable elements and conjugative plasmids). CRISPR clusters contain sequences complementary to antecedent mobile elements and target invading nucleic acids. CRISPR clusters are transcribed and processed into CRISPR RNA (crRNA), formerly called psiRNA (prokaryotic silencing) in this organism. Part of the Cmr ribonucleoprotein complex which has divalent cation-dependent endoribonuclease activity specific for ssRNA complementary to the crRNA (target RNA), generating 5' hydroxy- and 3' phosphate or 2'-3' cyclic phosphate termini. Cmr4 is probably the subunit that cleaves target RNA. Cmr complex does not cleave ssDNA complementary to the crRNA. Cleavage of invading RNA is guided by the crRNA; substrate cleavage occurs a fixed distance (14 nt) from the 3' end of the crRNA. In vitro reconstitution shows Cmr1-2 and Cmr5 are not absolutely necessary for target cleavage. This Pyrococcus furiosus (strain ATCC 43587 / DSM 3638 / JCM 8422 / Vc1) protein is CRISPR system Cmr subunit Cmr6.